A 965-amino-acid chain; its full sequence is MSSFHKNSSYMEDPDYPGYSGSQNHTQNYLRTQDDLEFPGCLDNPGFHHPRRNPYSSDSRTNPDYHHSLAEPDYPGSPSDADYQNTRCHPRSAHPRTRPDYEPDYEPDYNDFQSESYHPDLSMEPDYPGSHGHPGFAGVRSSVNSTGPRTNLGYLDLEEPDYPGAQGNSYHSGPRSHSNLPGSRRNAGYAGSRINSYPDSLGEPDYPGAENQPNSPDFYGKPDYPGAEEGDVYSPSKTLGVIGRSRGSFGILGREDGDYPEGIEMASLGMAGDPRNGYVNPAYMRGSSPVCPDRNLLLCARDWNTSPQGQKLIASLVPMTSRDRIKTIRNQPRTMQEKRELRKIVDKEKNKQSHGTFEANCCAQCLSSLSLAYRRTKSSLSELLNYISLWQKRFKVIGGKFGTSVLSYFSFLRWLLKFNIFSFVMNFSFIIIPQFTVGEKNTLQFTGLEFFTGAGYFRETVMYYGFYTNSTIRHRMGGASYNMQLAYIFTIGACLVICFFSLLFSMAKYFRNNFINPHIYSRGIAKLIFCWDFTVTHEKAVKLKQKNLSTEIRENLSEIRQENDRLTLNQKLTRFSVHVAAWLVSTGITAACCVAVYYLAEYNSEFLKTHKNPGAVLLLPFVVSCINLAVPRFYSMFRLVERYEIPRQEVYVLLIRNIFLKISIVGILCYYWLNIVALSGEECWETLIGQDIYRLLLMDFVFSLADSLLGEFLRRLIGMKFITSLSLQEFDIARNVLELIYAQTLAWLGIFFCPLLPFIQMITLFIMFYVKNVSLMMNFQPPSKAWRASQMITFFIFLLFFPSFTGVLCTLAITIWRLKPSADCGPFRGLPSFIQSIYSWIDTLSHRPGYLWVVWIYQNLIGSVHFFFILTLIVLIITYLYWQITEGRKVMIRLLHEQIINEGKDKMFLIEKLTKLQDIERRANPSTLVLERREVEQQSPLHLEELDAAPDLRLRRSMQEENAIA.

2 stretches are compositionally biased toward polar residues: residues Met1–Tyr10 and Ser20–Arg31. The tract at residues Met1–Pro235 is disordered. The Extracellular segment spans residues Met1–Lys417. The segment covering Thr61–Ala70 has biased composition (basic and acidic residues). Residues Gln166 to Pro181 show a composition bias toward polar residues. A Phosphoserine modification is found at Ser248. The helical transmembrane segment at Phe418–Gly438 threads the bilayer. Topologically, residues Glu439–Gln444 are cytoplasmic. Residues Phe445 to Tyr467 traverse the membrane as a helical segment. Residues Thr468–Gln484 lie on the Extracellular side of the membrane. Residues Leu485–Ser505 traverse the membrane as a helical segment. The Cytoplasmic portion of the chain corresponds to Met506–His578. The chain crosses the membrane as a helical span at residues Val579–Leu599. Residues Ala600 to Pro613 lie on the Extracellular side of the membrane. Residues Gly614 to Tyr634 traverse the membrane as a helical segment. At Ser635–Asn657 the chain is on the cytoplasmic side. A helical membrane pass occupies residues Ile658–Leu678. Over Ser679–Asp691 the chain is Extracellular. A helical membrane pass occupies residues Ile692–Phe712. Topologically, residues Leu713 to Trp747 are cytoplasmic. Residues Leu748 to Phe768 traverse the membrane as a helical segment. Over Tyr769–Phe794 the chain is Extracellular. Residues Phe795–Ile815 form a helical membrane-spanning segment. Residues Trp816–Asn859 lie on the Cytoplasmic side of the membrane. The chain crosses the membrane as a helical span at residues Leu860–Leu880. The Extracellular segment spans residues Tyr881–Ala965.

The protein belongs to the TMC family.

It localises to the membrane. Functionally, probable component of an ion channel. Molecular function hasn't been characterized yet. This Rattus norvegicus (Rat) protein is Transmembrane channel-like protein 5.